Reading from the N-terminus, the 153-residue chain is Arginine repressor (153 aa).

This sequence belongs to the ArgR family.

Its subcellular location is the cytoplasm. Its pathway is amino-acid biosynthesis; L-arginine biosynthesis [regulation]. Functionally, regulates arginine biosynthesis genes. The protein is Arginine repressor of Actinobacillus pleuropneumoniae serotype 7 (strain AP76).